A 122-amino-acid polypeptide reads, in one-letter code: Ribonuclease pancreatic (122 aa).

Substrate contacts are provided by Lys6 and Arg9. His11 functions as the Proton acceptor in the catalytic mechanism. Disulfide bonds link Cys25–Cys83, Cys39–Cys94, Cys57–Cys109, and Cys64–Cys71. Substrate contacts are provided by residues 40–44 (KPVNT), Lys65, and Arg84. Residue His117 is the Proton donor of the active site.

Belongs to the pancreatic ribonuclease family. As to quaternary structure, monomer. Interacts with and forms tight 1:1 complexes with RNH1. Dimerization of two such complexes may occur. Interaction with RNH1 inhibits this protein. In terms of tissue distribution, pancreas.

Its subcellular location is the secreted. The catalysed reaction is an [RNA] containing cytidine + H2O = an [RNA]-3'-cytidine-3'-phosphate + a 5'-hydroxy-ribonucleotide-3'-[RNA].. The enzyme catalyses an [RNA] containing uridine + H2O = an [RNA]-3'-uridine-3'-phosphate + a 5'-hydroxy-ribonucleotide-3'-[RNA].. Functionally, endonuclease that catalyzes the cleavage of RNA on the 3' side of pyrimidine nucleotides. Acts on single-stranded and double-stranded RNA. In Notamacropus rufogriseus (Red-necked wallaby), this protein is Ribonuclease pancreatic.